The primary structure comprises 389 residues: Glutaryl-CoA dehydrogenase (389 aa).

Substrate-binding residues include R87 and N91. FAD is bound by residues 126–129, S135, and 159–161; these read FGIT and WIS. Residue S135 participates in substrate binding. S181 contributes to the substrate binding site. FAD contacts are provided by residues R271, 281 to 284, R340, A344, and 367 to 371; these read FQMN and EGSAN. The active-site Proton acceptor is the E367. A substrate-binding site is contributed by R385.

This sequence belongs to the acyl-CoA dehydrogenase family. As to quaternary structure, homotetramer. FAD serves as cofactor.

The catalysed reaction is glutaryl-CoA + A = (2E)-glutaconyl-CoA + AH2. Its pathway is aromatic compound metabolism; benzoyl-CoA degradation. Its activity is regulated as follows. Inhibited by glutaconyl-CoA. Catalyzes the dehydrogenation of Glutaryl-CoA to glutaconyl-CoA. The polypeptide is Glutaryl-CoA dehydrogenase (Acd) (Desulfococcus multivorans).